The primary structure comprises 185 residues: dCTP deaminase (185 aa).

Residues 107–112, 131–133, Gln152, Tyr166, and Gln176 each bind dCTP; these read KSTYAR and TLE. The active-site Proton donor/acceptor is the Glu133.

The protein belongs to the dCTP deaminase family. Homotrimer.

It catalyses the reaction dCTP + H2O + H(+) = dUTP + NH4(+). Its pathway is pyrimidine metabolism; dUMP biosynthesis; dUMP from dCTP (dUTP route): step 1/2. Its function is as follows. Catalyzes the deamination of dCTP to dUTP. The sequence is that of dCTP deaminase from Wolbachia pipientis wMel.